Here is a 327-residue protein sequence, read N- to C-terminus: Probable protein phosphatase 2C 59 (327 aa).

Positions 1–24 are cleaved as a signal peptide; the sequence is MREVLLLGSLVVLALLSLFPCCSC. In terms of domain architecture, PPM-type phosphatase spans 64-310; that stretch reads SYGYASSPGK…DNITCLVVRF (247 aa). Residues D100, G101, D262, and D301 each coordinate Mn(2+).

This sequence belongs to the PP2C family. Requires Mg(2+) as cofactor. The cofactor is Mn(2+).

It catalyses the reaction O-phospho-L-seryl-[protein] + H2O = L-seryl-[protein] + phosphate. The catalysed reaction is O-phospho-L-threonyl-[protein] + H2O = L-threonyl-[protein] + phosphate. This Oryza sativa subsp. japonica (Rice) protein is Probable protein phosphatase 2C 59.